Consider the following 345-residue polypeptide: L-threonine 3-dehydrogenase (345 aa).

C42 is a Zn(2+) binding site. Active-site charge relay system residues include T44 and H47. Positions 67, 68, 97, 100, 103, and 111 each coordinate Zn(2+). NAD(+) is bound by residues I179, D199, R204, 266–268, and 290–291; these read LGI and IY.

Belongs to the zinc-containing alcohol dehydrogenase family. In terms of assembly, homotetramer. Zn(2+) serves as cofactor.

It localises to the cytoplasm. The enzyme catalyses L-threonine + NAD(+) = (2S)-2-amino-3-oxobutanoate + NADH + H(+). The protein operates within amino-acid degradation; L-threonine degradation via oxydo-reductase pathway; glycine from L-threonine: step 1/2. Catalyzes the NAD(+)-dependent oxidation of L-threonine to 2-amino-3-ketobutyrate. This chain is L-threonine 3-dehydrogenase, found in Rhizobium etli (strain ATCC 51251 / DSM 11541 / JCM 21823 / NBRC 15573 / CFN 42).